The chain runs to 202 residues: MKKIGVFGGTFDPIHIGHIYIAYEAYKILELDEVIFMPAGNPPHKKWKDITDEIIRYEMVKKAIEPYSFFSINNYEIEKKGLSFTYETLRYLHESFKEVELYFITGADCLVNLNSWKNINEIFKFSNLVVFNRPGFDKNDLLKRKEEFDREYCTNIVYLDLLNIEISSTLIRERVRESLEVKFFLPPGVVDIIDKYNLYRRE.

The protein belongs to the NadD family.

It carries out the reaction nicotinate beta-D-ribonucleotide + ATP + H(+) = deamido-NAD(+) + diphosphate. The protein operates within cofactor biosynthesis; NAD(+) biosynthesis; deamido-NAD(+) from nicotinate D-ribonucleotide: step 1/1. In terms of biological role, catalyzes the reversible adenylation of nicotinate mononucleotide (NaMN) to nicotinic acid adenine dinucleotide (NaAD). The polypeptide is Probable nicotinate-nucleotide adenylyltransferase (Clostridium perfringens (strain 13 / Type A)).